A 633-amino-acid polypeptide reads, in one-letter code: Chaperone protein HtpG (633 aa).

The segment at 1-341 is a; substrate-binding; it reads MSATSSKETL…SADLPLNVSR (341 aa). The interval 342-558 is b; it reads EILQSSRDID…EGDMSANLER (217 aa). The interval 559–633 is c; that stretch reads LLKAAGQAAP…LNGLLAMLPG (75 aa).

The protein belongs to the heat shock protein 90 family. As to quaternary structure, homodimer.

Its subcellular location is the cytoplasm. Molecular chaperone. Has ATPase activity. The protein is Chaperone protein HtpG of Thiobacillus denitrificans (strain ATCC 25259 / T1).